Consider the following 60-residue polypeptide: UPF0434 protein YcaR (60 aa).

The protein belongs to the UPF0434 family.

The protein is UPF0434 protein YcaR of Salmonella agona (strain SL483).